The chain runs to 223 residues: Thiamine-phosphate synthase (223 aa).

4-amino-2-methyl-5-(diphosphooxymethyl)pyrimidine-binding positions include Gln47–Lys51 and Asn84. Asp85 and Asp104 together coordinate Mg(2+). Position 123 (Ser123) interacts with 4-amino-2-methyl-5-(diphosphooxymethyl)pyrimidine. Thr150–Thr152 serves as a coordination point for 2-[(2R,5Z)-2-carboxy-4-methylthiazol-5(2H)-ylidene]ethyl phosphate. Lys153 lines the 4-amino-2-methyl-5-(diphosphooxymethyl)pyrimidine pocket. Residue Gly182 coordinates 2-[(2R,5Z)-2-carboxy-4-methylthiazol-5(2H)-ylidene]ethyl phosphate.

Belongs to the thiamine-phosphate synthase family. Mg(2+) serves as cofactor.

The enzyme catalyses 2-[(2R,5Z)-2-carboxy-4-methylthiazol-5(2H)-ylidene]ethyl phosphate + 4-amino-2-methyl-5-(diphosphooxymethyl)pyrimidine + 2 H(+) = thiamine phosphate + CO2 + diphosphate. The catalysed reaction is 2-(2-carboxy-4-methylthiazol-5-yl)ethyl phosphate + 4-amino-2-methyl-5-(diphosphooxymethyl)pyrimidine + 2 H(+) = thiamine phosphate + CO2 + diphosphate. It carries out the reaction 4-methyl-5-(2-phosphooxyethyl)-thiazole + 4-amino-2-methyl-5-(diphosphooxymethyl)pyrimidine + H(+) = thiamine phosphate + diphosphate. It functions in the pathway cofactor biosynthesis; thiamine diphosphate biosynthesis; thiamine phosphate from 4-amino-2-methyl-5-diphosphomethylpyrimidine and 4-methyl-5-(2-phosphoethyl)-thiazole: step 1/1. In terms of biological role, condenses 4-methyl-5-(beta-hydroxyethyl)thiazole monophosphate (THZ-P) and 2-methyl-4-amino-5-hydroxymethyl pyrimidine pyrophosphate (HMP-PP) to form thiamine monophosphate (TMP). This is Thiamine-phosphate synthase from Saccharopolyspora erythraea (strain ATCC 11635 / DSM 40517 / JCM 4748 / NBRC 13426 / NCIMB 8594 / NRRL 2338).